The following is a 211-amino-acid chain: Uridine kinase (211 aa).

Residue 13 to 20 coordinates ATP; sequence GASASGKS.

Belongs to the uridine kinase family.

It localises to the cytoplasm. The enzyme catalyses uridine + ATP = UMP + ADP + H(+). It catalyses the reaction cytidine + ATP = CMP + ADP + H(+). It functions in the pathway pyrimidine metabolism; CTP biosynthesis via salvage pathway; CTP from cytidine: step 1/3. Its pathway is pyrimidine metabolism; UMP biosynthesis via salvage pathway; UMP from uridine: step 1/1. This Shewanella pealeana (strain ATCC 700345 / ANG-SQ1) protein is Uridine kinase.